The primary structure comprises 178 residues: Cytidylate kinase (178 aa).

An ATP-binding site is contributed by Gly-7–Thr-15.

The protein belongs to the cytidylate kinase family. Type 2 subfamily.

The protein localises to the cytoplasm. The catalysed reaction is CMP + ATP = CDP + ADP. It carries out the reaction dCMP + ATP = dCDP + ADP. This Methanococcus maripaludis (strain C7 / ATCC BAA-1331) protein is Cytidylate kinase.